The sequence spans 346 residues: Cyclin-dependent kinase 20 (346 aa).

Positions 4-288 constitute a Protein kinase domain; sequence YCILGRIGEG…ASKALLHQYF (285 aa). Residues 10–18 and Lys-33 contribute to the ATP site; that span reads IGEGAHGIV. The Proton acceptor role is filled by Asp-127.

Belongs to the protein kinase superfamily. CMGC Ser/Thr protein kinase family. CDC2/CDKX subfamily. In terms of assembly, monomer. Interacts with TBC1D32. Interacts with MAK.

The protein resides in the nucleus. It is found in the cytoplasm. Its subcellular location is the cell projection. The protein localises to the cilium. The catalysed reaction is L-seryl-[protein] + ATP = O-phospho-L-seryl-[protein] + ADP + H(+). It carries out the reaction L-threonyl-[protein] + ATP = O-phospho-L-threonyl-[protein] + ADP + H(+). In terms of biological role, required for high-level Shh responses in the developing neural tube. Together with TBC1D32, controls the structure of the primary cilium by coordinating assembly of the ciliary membrane and axoneme, allowing GLI2 to be properly activated in response to SHH signaling. Involved in cell growth. Activates CDK2, a kinase involved in the control of the cell cycle, by phosphorylating residue 'Thr-160'. This chain is Cyclin-dependent kinase 20 (CDK20), found in Homo sapiens (Human).